The primary structure comprises 101 residues: Small ribosomal subunit protein uS14 (101 aa).

This sequence belongs to the universal ribosomal protein uS14 family. In terms of assembly, part of the 30S ribosomal subunit. Contacts proteins S3 and S10.

Functionally, binds 16S rRNA, required for the assembly of 30S particles and may also be responsible for determining the conformation of the 16S rRNA at the A site. This Shewanella halifaxensis (strain HAW-EB4) protein is Small ribosomal subunit protein uS14.